The chain runs to 286 residues: ATP synthase gamma chain (286 aa).

This sequence belongs to the ATPase gamma chain family. F-type ATPases have 2 components, CF(1) - the catalytic core - and CF(0) - the membrane proton channel. CF(1) has five subunits: alpha(3), beta(3), gamma(1), delta(1), epsilon(1). CF(0) has three main subunits: a, b and c.

It is found in the cell inner membrane. Its function is as follows. Produces ATP from ADP in the presence of a proton gradient across the membrane. The gamma chain is believed to be important in regulating ATPase activity and the flow of protons through the CF(0) complex. This is ATP synthase gamma chain from Shewanella frigidimarina (strain NCIMB 400).